Reading from the N-terminus, the 245-residue chain is Adenylate kinase (245 aa).

Residue 15–20 (GSGKGT) coordinates ATP. The NMP stretch occupies residues 35-64 (SSGDLLRGAVSKDTPLSQEIKSYLDQGKLL). AMP-binding positions include serine 36, arginine 41, 62–64 (KLL), 103–106 (GFPR), and glutamine 110. Residues 143–176 (SRYICPACQGIYNEQQGFSSCPKCSVELIRRSDD) are LID. ATP is bound at residue arginine 144. Residues cysteine 147 and cysteine 150 each coordinate Zn(2+). Position 153–154 (153–154 (IY)) interacts with ATP. The Zn(2+) site is built by cysteine 163 and cysteine 166. 2 residues coordinate AMP: arginine 173 and arginine 184. Residue alanine 212 coordinates ATP.

Belongs to the adenylate kinase family. As to quaternary structure, monomer.

It localises to the cytoplasm. It catalyses the reaction AMP + ATP = 2 ADP. It participates in purine metabolism; AMP biosynthesis via salvage pathway; AMP from ADP: step 1/1. Its function is as follows. Catalyzes the reversible transfer of the terminal phosphate group between ATP and AMP. Plays an important role in cellular energy homeostasis and in adenine nucleotide metabolism. The protein is Adenylate kinase of Chlamydia trachomatis serovar L2 (strain ATCC VR-902B / DSM 19102 / 434/Bu).